Consider the following 4085-residue polypeptide: Replicase polyprotein 1a (4085 aa).

Residues 2–109 (ACNRVTLAVA…EFDVVFGKRG (108 aa)) form the CoV Nsp1 globular domain. Residues 113–359 (VTYTDQYLCG…RNSVTDECRL (247 aa)) form the CoV Nsp2 N-terminal domain. Residues cysteine 246, cysteine 248, cysteine 265, and cysteine 266 each coordinate Zn(2+). Residues 246 to 266 (CTCGTKSWSVGDWTGFKSSCC) are C4. In terms of domain architecture, CoV Nsp2 middle spans 389-775 (YDDIFAESKP…LEAYNAFLDT (387 aa)). The CoV Nsp2 C-terminal domain maps to 773–897 (LDTVVSTVKI…LPVAFTKAAG (125 aa)). Residues 898–993 (GKVSFSDDVE…VMISEWPLSV (96 aa)) form the Ubiquitin-like 1 domain. The 253-residue stretch at 1016–1268 (VNSIFDIETV…DTTPKEEFVV (253 aa)) folds into the Peptidase C16 1 domain. Catalysis depends on cysteine 1054, which acts as the For PL1-PRO activity. The C4-type 1; degenerate zinc finger occupies 1126-1157 (CSCTSGRLEESGAVLFCTPTKKAFPYGTCLNC). Catalysis depends on for PL1-PRO activity residues histidine 1205 and aspartate 1218. The Macro domain occupies 1269–1436 (KEKLNAFLVH…KVKDFVSGLV (168 aa)). In terms of domain architecture, Ubiquitin-like 2 spans 1600–1655 (AKVITIKVTEDGVNVHDVTVTTDKSFEQQVGVIADKDKDLSGAVPSDLNTSELLTK). Positions 1663–1914 (EFYGFKDAVT…TVKPKPVINQ (252 aa)) constitute a Peptidase C16 2 domain. Cysteine 1701 serves as the catalytic For PL2-PRO activity. Zn(2+) contacts are provided by cysteine 1780, cysteine 1783, cysteine 1813, and histidine 1815. The C4-type 2; atypical zinc finger occupies 1780 to 1815 (CVECDAKFKNSVASINSAIVCASVKRDGVQVGYCVH). Catalysis depends on for PL2-PRO activity residues histidine 1863 and aspartate 1868. Residues 1925–2115 (FGDFLIHNFV…STVGVFLGYK (191 aa)) are HD1. The chain crosses the membrane as a helical span at residues 1998 to 2018 (LLLLIYTLYSVVLLCVRFGPF). One can recognise a 3Ecto domain in the interval 2005–2070 (LYSVVLLCVR…LDVVWKHITD (66 aa)). Intrachain disulfides connect cysteine 2021–cysteine 2048 and cysteine 2039–cysteine 2045. The next 2 membrane-spanning stretches (helical) occupy residues 2068–2088 (ITDP…LLIF) and 2095–2115 (CFLL…LGYK). The tract at residues 2144–2234 (SFVRHVLFGC…ITKTNVQPTG (91 aa)) is Y1. Positions 2144–2483 (SFVRHVLFGC…PATSIVAKQG (340 aa)) constitute a CoV Nsp3 Y domain. Histidine 2148, cysteine 2153, cysteine 2158, cysteine 2161, cysteine 2194, histidine 2197, cysteine 2201, and cysteine 2204 together coordinate Zn(2+). The tract at residues 2148 to 2161 (HVLFGCENPDCIAC) is ZF1. Residues 2194–2204 (CKKHRFFCVDC) form a ZF2 region. A Y2 region spans residues 2235–2324 (PAYVMIDKVE…LVDSELLSTL (90 aa)). The segment at 2235 to 2483 (PAYVMIDKVE…PATSIVAKQG (249 aa)) is coV-Y. Residues 2325-2381 (SVDFNGVLHKAYIDVLRNSFGKDLNANMSLAECKRALGLSISDHEFTSAISNAHRCD) form a Y3 region. The Y4 stretch occupies residues 2382 to 2483 (VLLSDLSFNN…PATSIVAKQG (102 aa)). A run of 6 helical transmembrane segments spans residues 2491–2511 (LTWL…LCFF), 2731–2751 (LWNL…VAAM), 2755–2775 (ILLN…VTKF), 2782–2802 (LSVG…SYIV), 2809–2829 (MIAY…AWIW), and 2834–2854 (LIAY…LAML). The segment at 2491-2854 (LTWLWLLCGL…LCAWYFLAML (364 aa)) is HD2. In terms of domain architecture, Nsp4C spans 2870–2965 (LFEGDKFVGT…PTVSYGSTLQ (96 aa)). Positions 2966 to 3267 (AGLRKMAQPS…VKQMFGVNLQ (302 aa)) constitute a Peptidase C30 domain. Catalysis depends on for 3CL-PRO activity residues histidine 3006 and cysteine 3109. 7 helical membrane passes run 3281-3301 (FAGF…TIWV), 3304-3324 (GFLT…TFVV), 3328-3348 (VLFL…QNCA), 3367-3387 (VMQM…VALL), 3401-3421 (CTYL…YDYV), 3422-3442 (SLLV…AIIF), and 3467-3487 (LLFY…LYWI). The tract at residues 3281-3487 (FAGFFVMFWA…CMYYGLLYWI (207 aa)) is HD3. The 83-residue stretch at 3547–3629 (SKLTDLKCTN…SYFENDSILQ (83 aa)) folds into the RdRp Nsp7 cofactor domain. One can recognise a RdRp Nsp8 cofactor domain in the interval 3630–3824 (SVASSFVGMP…LTCERVVKLQ (195 aa)). One can recognise a Nsp9 ssRNA-binding domain in the interval 3825–3933 (NNEIMPGKMK…GYIGATVRLQ (109 aa)). Positions 3934–4072 (AGKQTEFVSN…DRTAIQSFDN (139 aa)) constitute an ExoN/MTase coactivator domain. Zn(2+)-binding residues include cysteine 4007, cysteine 4010, histidine 4016, cysteine 4023, cysteine 4049, cysteine 4052, cysteine 4060, and cysteine 4062. Zinc fingers lie at residues 4007-4023 (CIYC…DGFC) and 4049-4062 (CKVC…GCTC).

This sequence belongs to the coronaviruses polyprotein 1ab family. In terms of assembly, 3CL-PRO exists as monomer and homodimer. Eight copies of nsp7 and eight copies of nsp8 assemble to form a heterohexadecamer. Nsp9 is a dimer. Nsp10 forms a dodecamer. Post-translationally, specific enzymatic cleavages in vivo by its own proteases yield mature proteins. 3CL-PRO and PL-PRO proteinases are autocatalytically processed.

It localises to the host membrane. The protein resides in the host cytoplasm. It is found in the host perinuclear region. The enzyme catalyses Thiol-dependent hydrolysis of ester, thioester, amide, peptide and isopeptide bonds formed by the C-terminal Gly of ubiquitin (a 76-residue protein attached to proteins as an intracellular targeting signal).. Functionally, the papain-like proteinase 1 (PLP1) and papain-like proteinase 2 (PLP2) are responsible for the cleavages located at the N-terminus of the replicase polyprotein. In addition, PLP2 possesses a deubiquitinating/deISGylating activity and processes both 'Lys-48'- and 'Lys-63'-linked polyubiquitin chains from cellular substrates. PLP2 also antagonizes innate immune induction of type I interferon by blocking the nuclear translocation of host IRF-3. Responsible for the majority of cleavages as it cleaves the C-terminus of replicase polyprotein at 11 sites. Recognizes substrates containing the core sequence [ILMVF]-Q-|-[SGACN]. Inhibited by the substrate-analog Cbz-Val-Asn-Ser-Thr-Leu-Gln-CMK. Also contains an ADP-ribose-1''-phosphate (ADRP)-binding function. In terms of biological role, nsp7-nsp8 hexadecamer may possibly confer processivity to the polymerase, maybe by binding to dsRNA or by producing primers utilized by the latter. Its function is as follows. Nsp9 is a ssRNA-binding protein. The sequence is that of Replicase polyprotein 1a from Homo sapiens (Human).